Consider the following 375-residue polypeptide: Heat shock protein 42 (375 aa).

4 disordered regions span residues 21–59 (TGQR…HPLY), 81–127 (SPEY…YYHC), 154–238 (PYEG…ETRM), and 347–375 (PKPK…TVEN). Over residues 22-48 (GQRGQQGYPRQPQRPQRYHPHYGQVHV) the composition is skewed to low complexity. Residues 49-58 (GGHHPRHHPL) are compositionally biased toward basic residues. 2 stretches are compositionally biased toward acidic residues: residues 85–101 (GYDD…EDMV) and 158–168 (TEPEIEANTEQ). A compositionally biased stretch (basic and acidic residues) spans 169 to 197 (EGEKGEEKDKKDKSEAPKEEAGETNKEKP). S182, S213, S214, S215, and S223 each carry phosphoserine. Residues 237–356 (RMDLPFSPEV…PKPKKRIAIE (120 aa)) enclose the sHSP domain. The span at 357-367 (EIPDEELEFEE) shows a compositional bias: acidic residues.

Belongs to the small heat shock protein (HSP20) family. As to quaternary structure, forms oligomeric complexes. Interacts with itself.

This chain is Heat shock protein 42 (HSP42), found in Saccharomyces cerevisiae (strain ATCC 204508 / S288c) (Baker's yeast).